We begin with the raw amino-acid sequence, 1174 residues long: Ankyrin repeat and LEM domain-containing protein 2 homolog (1174 aa).

Low complexity-rich tracts occupy residues 37-56 (NPAS…SAAS), 150-164 (SSPT…SSPT), 174-198 (LGSN…SSSN), and 205-219 (QQQM…PQQP). Disordered stretches follow at residues 37-74 (NPAS…YEDP) and 141-230 (PIIS…PFRA). An ANK repeat occupies 338-367 (RGETPLHFAAKNGHVAMVEVLVSYPECKSL). Disordered regions lie at residues 519 to 543 (AEAT…HNNN) and 961 to 981 (GSSS…SPGI). Polar residues predominate over residues 521–532 (ATSSPKPTKNVP). Positions 533–543 (NGTNECEHNNN) are enriched in low complexity.

It belongs to the ANKLE2 family.

It is found in the endoplasmic reticulum. The protein localises to the nucleus envelope. It localises to the cytoplasm. Its function is as follows. Involved in brain development probably by regulating asymmetric division of neuroblasts. Regulates neuroblast asymmetric cell division by controlling asymmetric protein localization of Mira, Baz, Par-6 and aPKC, and spindle alignment. Also, regulates the localization of kinase Ball during mitosis, specifically maintaining Ball in the nucleus during interphase. Required for proper ER and nuclear envelope morphology in neuroblasts. In Drosophila melanogaster (Fruit fly), this protein is Ankyrin repeat and LEM domain-containing protein 2 homolog.